Consider the following 347-residue polypeptide: Anthranilate phosphoribosyltransferase (347 aa).

Residues Gly88, 91–92, Thr96, 98–101, 116–124, and Ser128 contribute to the 5-phospho-alpha-D-ribose 1-diphosphate site; these read GD, NIST, and KHGNRSVSS. Residue Gly88 coordinates anthranilate. Ser100 serves as a coordination point for Mg(2+). Asn119 is a binding site for anthranilate. Arg174 contributes to the anthranilate binding site. The Mg(2+) site is built by Asp232 and Glu233.

It belongs to the anthranilate phosphoribosyltransferase family. In terms of assembly, homodimer. It depends on Mg(2+) as a cofactor.

The catalysed reaction is N-(5-phospho-beta-D-ribosyl)anthranilate + diphosphate = 5-phospho-alpha-D-ribose 1-diphosphate + anthranilate. Its pathway is amino-acid biosynthesis; L-tryptophan biosynthesis; L-tryptophan from chorismate: step 2/5. Its function is as follows. Catalyzes the transfer of the phosphoribosyl group of 5-phosphorylribose-1-pyrophosphate (PRPP) to anthranilate to yield N-(5'-phosphoribosyl)-anthranilate (PRA). This chain is Anthranilate phosphoribosyltransferase, found in Shewanella oneidensis (strain ATCC 700550 / JCM 31522 / CIP 106686 / LMG 19005 / NCIMB 14063 / MR-1).